The chain runs to 620 residues: MQAASLSKIWRFDGNVGPENMDSSSFEDNECIETCKPNVLNVSERRELIHALSNQPEEASELLNSWSRNEIMKIICAEMGKERKYTGLNKPKLIENLLNLVSRPLGETSCSDRRNSRKKEKKMIGYIICCENLACRAALGCDDTFCRRCSCCICQKFDDNKDPSLWLTCDACGSSCHLECGLKQDRYGIGSDDLDGRFYCAYCGKDNDLLGCWRKQVKVAKETRRVDVLCYRLSLGQKLLRGTTKYRNLLELMDEAVKKLEGDVGPLSGWAMKMARGIVNRLSSGVHVQKLCSQAMEALDKVVSPSESVSGQGDKMTVRVEEIQARSVTVRVDSEEPSSSTQNKITGFRLFCRKSKDEECSSQGNCVVYLPETTSAIQGLEPDTEFCLRVVSFNEEGDLDESELRFTTLKDDGDEAGDQQSPLTNSSSGLCSNPSLPEDESNNVNKSCSKGNGDKDNTEHCSAGEVESELEEERLVKRKANKIDGRDLLVTPCKRDIYKGKQGGNKRFKSRTVSLNEKPEINNAANGVGDKDLGHIVKTIRCLEEEGHIDKSFRERFLTWYSLRATHREVRVVKIFVETFMEDLSSLGQQLVDTFSESILSKRSSTNGVVPAGICLKLWH.

The PHD-type zinc finger occupies 148-206; sequence RCSCCICQKFDDNKDPSLWLTCDACGSSCHLECGLKQDRYGIGSDDLDGRFYCAYCGKD. The Nuclear localization signal signature appears at 213–220; it reads WRKQVKVA. The 99-residue stretch at 314–412 folds into the Fibronectin type-III domain; the sequence is DKMTVRVEEI…ELRFTTLKDD (99 aa). Positions 411–466 are disordered; it reads DDGDEAGDQQSPLTNSSSGLCSNPSLPEDESNNVNKSCSKGNGDKDNTEHCSAGEV. The segment covering 418–435 has biased composition (polar residues); sequence DQQSPLTNSSSGLCSNPS. The Nuclear localization signal motif lies at 493–500; the sequence is CKRDIYKG. The VIN3-Interacting Domain (VID) stretch occupies residues 512 to 620; that stretch reads TVSLNEKPEI…PAGICLKLWH (109 aa).

As to quaternary structure, interacts with VIL1 and VIL2. The heterodimer made of VIN3 and VIL1 is required for establishing the vernalization-induced epigenetic silencing of FLC. Component of the plant homeodomain / polycomb repressive complex 2 (PHD-PRC2) large complex during prolonged cold, composed of core PRC2 components (VRN2, EZA1, FIE and MSI1), and three related PHD finger proteins (VIL1, VIL2 and VIN3) that mediates histone H3 trimethylation on 'Lys-27' (H3K27me3). In terms of tissue distribution, expressed in shoot and root apices. Displays the same pattern of expression as FLC.

The protein resides in the nucleus. It localises to the nucleus speckle. In terms of biological role, plays a central role in vernalization by mediating the initial transcriptional repression of the homeotic gene FLC, a floral repressor, after a cold treatment. However, due to its transient expression, it cannot maintain repression of FLC, which is then maintained by Polycomb Group complexes containing VRN2 throughout development. Required to deacetylate histones on the FLC promoter. Together with VIL1, required during vernalization for the modifications of FLC and FLM chromatin that are associated with an epigenetically silenced state (e.g. chromatin modifications, histone deacetylation, and trimethylated H3 'Lys-4' H3K4me3 and 'Lys-27' H3K27me3) and with acquisition of competence to flower. In Arabidopsis thaliana (Mouse-ear cress), this protein is Protein VERNALIZATION INSENSITIVE 3 (VIN3).